The sequence spans 56 residues: uncharacterized protein (56 aa).

The helical transmembrane segment at 30–52 (IKIGIICVIITWAIFSINHHHTI) threads the bilayer.

Its subcellular location is the membrane. This is an uncharacterized protein from Dictyostelium discoideum (Social amoeba).